We begin with the raw amino-acid sequence, 993 residues long: Desmoglein-3 (993 aa).

Positions 1–23 (MTCLFPRALGSLALLMVVLLVQG) are cleaved as a signal peptide. Residues 24-49 (ELHVKPGGQHREDGTALQLAKRRYKR) constitute a propeptide that is removed on maturation. Cadherin domains are found at residues 50-157 (EWVK…PPIF), 158-267 (SQTI…FPVL), 268-388 (RESQ…PPSK), and 384-495 (RPPS…CPSV). Residues 50–617 (EWVKFAKPCR…YGESSWRLGP (568 aa)) are Extracellular-facing. 2 N-linked (GlcNAc...) asparagine glycosylation sites follow: Asn110 and Asn180. Residues Asn459 and Asn546 are each glycosylated (N-linked (GlcNAc...) asparagine). Residues 618-638 (AAIGLILLGLLMLLLAPLLLL) traverse the membrane as a helical segment. Residues 639–993 (TCDCGSGPIG…LYTKETCSHL (355 aa)) lie on the Cytoplasmic side of the membrane. Residues 641–714 (DCGSGPIGGA…NTYAGGTMVE (74 aa)) are required for interaction with CTNND1 and localization at cell-cell junctions. Residues 845–876 (AKQAKPGPKDSGSGADTCARSMEVPQSGSNRY) form a disordered region. 2 Desmoglein repeat repeats span residues 905–930 (MSTS…LLTE) and 931–961 (TYST…ERVI).

As to quaternary structure, homodimer. Part of a complex that contains DSG3, PKP1, YAP1 and YWHAG; the complex is required for localization of DSG3 and YAP1 to the cell membrane in keratinocytes. Interacts with PKP2. Interacts with CTNND1; the interaction facilitates DSG3 localization and retention at cell-cell junctions. Interacts with CDH1; the interaction is required for CDH1 localization to developing adherens junctions. Interacts with RAC1; the interaction is required for DSG3 translocation to cell-cell junctions, organization of cortical F-actin bundles and actin anchoring at cell-cell junctions. Interacts with DSC3; the interaction may limit the interaction of DSC3 with p38MAPK family members and therefore repress p38MAPK signaling activation. Expressed in the basal layer of the outer root sheath of the telogen hair club, specifically at the cell membrane between the apex of the cells and the surrounding hair club (at protein level). Expression is less abundant between the lateral margins of the outer root sheath basal cells (at protein level). Expressed in epidermis. Expressed in the epithelium of the tongue.

Its subcellular location is the cell membrane. It is found in the cell junction. The protein localises to the desmosome. The protein resides in the cytoplasm. It localises to the tight junction. A component of desmosome cell-cell junctions which are required for positive regulation of cellular adhesion. Required for adherens and desmosome junction assembly in response to mechanical force in keratinocytes. Required for desmosome-mediated cell-cell adhesion of cells surrounding the telogen hair club and the basal layer of the outer root sheath epithelium, consequently is essential for the anchoring of telogen hairs in the hair follicle. Required for the maintenance of the epithelial barrier via promoting desmosome-mediated intercellular attachment of suprabasal epithelium to basal cells. May play a role in the protein stability of the desmosome plaque components DSP, JUP, PKP1, PKP2 and PKP3. Required for YAP1 localization at the plasma membrane in keratinocytes in response to mechanical strain, via the formation of an interaction complex composed of DSG3, PKP1 and YWHAG. May also be involved in the positive regulation of YAP1 target gene transcription and as a result cell proliferation. Positively regulates cellular contractility and cell junction formation via organization of cortical F-actin bundles and anchoring of actin to tight junctions, in conjunction with RAC1. The cytoplasmic pool of DSG3 is required for the localization of CDH1 and CTNNB1 at developing adherens junctions, potentially via modulation of SRC activity. Inhibits keratinocyte migration via suppression of p38MAPK signaling, may therefore play a role in moderating wound healing. The protein is Desmoglein-3 (Dsg3) of Mus musculus (Mouse).